The primary structure comprises 288 residues: Large ribosomal subunit protein uL2 (288 aa).

Positions 232–265 (GTAMNPVDHPHGGGEGKTKGKHPESPWGWKTKGY) are disordered. A compositionally biased stretch (basic and acidic residues) spans 239–255 (DHPHGGGEGKTKGKHPE).

Belongs to the universal ribosomal protein uL2 family. As to quaternary structure, part of the 50S ribosomal subunit. Forms a bridge to the 30S subunit in the 70S ribosome.

One of the primary rRNA binding proteins. Required for association of the 30S and 50S subunits to form the 70S ribosome, for tRNA binding and peptide bond formation. It has been suggested to have peptidyltransferase activity; this is somewhat controversial. Makes several contacts with the 16S rRNA in the 70S ribosome. In Hydrogenobaculum sp. (strain Y04AAS1), this protein is Large ribosomal subunit protein uL2.